A 291-amino-acid chain; its full sequence is Formamidopyrimidine-DNA glycosylase (291 aa).

The active-site Schiff-base intermediate with DNA is proline 2. Glutamate 3 acts as the Proton donor in catalysis. Lysine 58 serves as the catalytic Proton donor; for beta-elimination activity. 3 residues coordinate DNA: histidine 100, arginine 123, and lysine 166. The segment at 257–291 (SVYGREGKECFQCGIPITRISQSGRSSFYCSQCQK) adopts an FPG-type zinc-finger fold. Arginine 281 (proton donor; for delta-elimination activity) is an active-site residue.

The protein belongs to the FPG family. As to quaternary structure, monomer. Requires Zn(2+) as cofactor.

It carries out the reaction Hydrolysis of DNA containing ring-opened 7-methylguanine residues, releasing 2,6-diamino-4-hydroxy-5-(N-methyl)formamidopyrimidine.. The catalysed reaction is 2'-deoxyribonucleotide-(2'-deoxyribose 5'-phosphate)-2'-deoxyribonucleotide-DNA = a 3'-end 2'-deoxyribonucleotide-(2,3-dehydro-2,3-deoxyribose 5'-phosphate)-DNA + a 5'-end 5'-phospho-2'-deoxyribonucleoside-DNA + H(+). Functionally, involved in base excision repair of DNA damaged by oxidation or by mutagenic agents. Acts as a DNA glycosylase that recognizes and removes damaged bases. Has a preference for oxidized purines, such as 7,8-dihydro-8-oxoguanine (8-oxoG). Has AP (apurinic/apyrimidinic) lyase activity and introduces nicks in the DNA strand. Cleaves the DNA backbone by beta-delta elimination to generate a single-strand break at the site of the removed base with both 3'- and 5'-phosphates. In Bartonella quintana (strain Toulouse) (Rochalimaea quintana), this protein is Formamidopyrimidine-DNA glycosylase.